The following is a 299-amino-acid chain: Sulfate adenylyltransferase subunit 2 (299 aa).

This sequence belongs to the PAPS reductase family. CysD subfamily. In terms of assembly, sulfate-activating enzymes, NodP and NodQ, may be physically associated.

The enzyme catalyses sulfate + ATP + H(+) = adenosine 5'-phosphosulfate + diphosphate. In terms of biological role, proposed to provide activated sulfate for transfer to nod factor. The protein is Sulfate adenylyltransferase subunit 2 (nodP) of Rhizobium meliloti (strain 1021) (Ensifer meliloti).